A 563-amino-acid chain; its full sequence is Tripeptidyl-peptidase 1 (563 aa).

The signal sequence occupies residues 1–19; the sequence is MGLQARFLGLLALVIAGKC. Positions 20-195 are cleaved as a propeptide — removed in mature form; it reads THSPEPDQRW…PEPQGVGPVG (176 aa). C111 and C122 are joined by a disulfide. Residues 199-563 form the Peptidase S53 domain; sequence GVTPSVLRQR…PALLKTLLNP (365 aa). 2 N-linked (GlcNAc...) asparagine glycosylation sites follow: N210 and N222. Active-site charge relay system residues include E272 and D276. Residues N286, N313, and N443 are each glycosylated (N-linked (GlcNAc...) asparagine). Disulfide bonds link C365-C526 and C522-C537. Catalysis depends on S475, which acts as the Charge relay system. Ca(2+) is bound by residues D517 and V518. Ca(2+) is bound by residues G539, G541, and D543.

In terms of assembly, monomer. Interacts with CLN5. Interacts with CLN3. Ca(2+) is required as a cofactor. Post-translationally, activated by autocatalytic proteolytical processing upon acidification. N-glycosylation is required for processing and activity.

It localises to the lysosome. The protein localises to the melanosome. It carries out the reaction Release of an N-terminal tripeptide from a polypeptide, but also has endopeptidase activity.. Its function is as follows. Lysosomal serine protease with tripeptidyl-peptidase I activity. May act as a non-specific lysosomal peptidase which generates tripeptides from the breakdown products produced by lysosomal proteinases. Requires substrates with an unsubstituted N-terminus. This is Tripeptidyl-peptidase 1 (Tpp1) from Rattus norvegicus (Rat).